Reading from the N-terminus, the 320-residue chain is Histidine decarboxylase proenzyme (320 aa).

A propeptide spanning residues 2–11 is cleaved from the precursor; it reads NKNLEANRNR. Serine 98 is subject to Pyruvic acid (Ser). Glutamate 215 acts as the Proton donor in catalysis.

As to quaternary structure, the proenzyme is a hexamer of identical pi chains; each pi chain monomer is cleaved to form a small (or beta) chain and a large (or alpha) chain by non-hydrolytic self-catalysis. The cofactor is pyruvate.

It carries out the reaction L-histidine + H(+) = histamine + CO2. The polypeptide is Histidine decarboxylase proenzyme (hdc) (Clostridium perfringens (strain 13 / Type A)).